The sequence spans 70 residues: MTILESITKISNASMDINKINSNNSNNINNNSNKIIQQLPFINIYEKSICTAIIPHNEIERKMPIFKRFC.

This is an uncharacterized protein from Dictyostelium discoideum (Social amoeba).